Consider the following 424-residue polypeptide: Sulfatase ppz1 (424 aa).

Asp13, Asp203, and Asn204 together coordinate Ca(2+).

The protein belongs to the sulfatase family. The cofactor is Ca(2+).

Sulfatase; part of the gene cluster that mediates the biosynthesis of pyrrolopyrazines, secondary metabolites showing insecticidal activity. The role of ppz1 within the pathway has still to be determined. The single multifunctional NRPS ppzA is sufficient to produce peramine via condensation of 1-pyrroline-5-carboxylate and arginine, N-methylation of the alpha-amino group of arginine and reduction of the thioester and the cyclization to form an iminium ion resulting in release from the peptide synthetase. Deprotonation of this intermediate and oxidation of the pyrroline ring would give rise to peramine. In Epichloe species that produce only peramine, the peramine synthetase gene is not localized in a gene cluster, in contrast to Metarhizium species that contain additional pyrrolopyrazine biosynthesis genes. The 2-oxoglutarate-Fe(II) type oxidoreductase ppzC hydroxylates peramine to yield the newly identified compound 8-hydroxyperamine whereas ppzD converts L-proline into trans-4-hydroxy-L-proline, a precursor of peramine biosynthesis. The chain is Sulfatase ppz1 from Metarhizium majus (strain ARSEF 297).